The primary structure comprises 359 residues: Fructose-bisphosphate aldolase (359 aa).

Serine 62 serves as a coordination point for D-glyceraldehyde 3-phosphate. Aspartate 109 serves as the catalytic Proton donor. Histidine 110, aspartate 144, glutamate 174, and histidine 226 together coordinate Zn(2+). Glycine 227 is a binding site for dihydroxyacetone phosphate. Histidine 265 contacts Zn(2+). Residues 266–268 (GGS) and 287–290 (NLDT) contribute to the dihydroxyacetone phosphate site.

This sequence belongs to the class II fructose-bisphosphate aldolase family. In terms of assembly, homodimer. Zn(2+) is required as a cofactor.

The protein resides in the cytoplasm. The catalysed reaction is beta-D-fructose 1,6-bisphosphate = D-glyceraldehyde 3-phosphate + dihydroxyacetone phosphate. The protein operates within carbohydrate degradation; glycolysis; D-glyceraldehyde 3-phosphate and glycerone phosphate from D-glucose: step 4/4. Functionally, catalyzes the aldol condensation of dihydroxyacetone phosphate (DHAP or glycerone-phosphate) with glyceraldehyde 3-phosphate (G3P) to form fructose 1,6-bisphosphate (FBP) in gluconeogenesis and the reverse reaction in glycolysis. The protein is Fructose-bisphosphate aldolase (FBA1) of Candida albicans (strain SC5314 / ATCC MYA-2876) (Yeast).